The chain runs to 633 residues: Hyphal wall protein 1 (633 aa).

The N-terminal stretch at 1–27 (MRLSTAQLIAIAYYMLSIGATVPQVDG) is a signal peptide. Disordered regions lie at residues 40 to 306 (SYDY…TTTT) and 411 to 569 (CPLT…SGAI). Positions 42 to 114 (DYYQEPCDDY…DYPQQPQEPC (73 aa)) are enriched in low complexity. The stretch at 46–58 (EPCDDYPQQQQQQ) is one 1; approximate repeat. A 14 X 10 AA tandem repeats of [EVIQ]-P-[CDT]-D-[YNW]-P-[PQ]-[QI]-[QP]-[QDN] region spans residues 46 to 187 (EPCDDYPQQQ…PNIPTDWIPD (142 aa)). Residues 59-69 (EPCDYPQQQQQ) form a 2; approximate repeat. A 3; approximate repeat occupies 70–81 (EEPCDYPQQQPQ). Repeat copies occupy residues 82–91 (EPCDYPQQPQ), 92–101 (EPCDYPQQPQ), 102–111 (EPCDYPQQPQ), 112–121 (EPCDNPPQPD), 122–131 (VPCDNPPQPD), 132–141 (VPCDNPPQPD), 142–151 (IPCDNPPQPD), 152–161 (IPCDNPPQPD), and 162–171 (QPDDNPPIPN). A compositionally biased stretch (pro residues) spans 115–171 (DNPPQPDVPCDNPPQPDVPCDNPPQPDIPCDNPPQPDIPCDNPPQPDQPDDNPPIPN). The stretch at 172–179 (IPTDWIPN) is one 13; truncated repeat. Low complexity-rich tracts occupy residues 172-183 (IPTDWIPNIPTD) and 193-306 (TTPA…TTTT). A 14; truncated repeat occupies 180-187 (IPTDWIPD). 2 N-linked (GlcNAc...) asparagine glycosylation sites follow: Asn240 and Asn285. Over residues 414-425 (TENTPGTDSTPE) the composition is skewed to polar residues. A compositionally biased stretch (low complexity) spans 507–549 (ETKPAAPKSSAPATEPSPVAPGTESAPAGPGASSSPKSSVLAS). A glycan (N-linked (GlcNAc...) asparagine) is linked at Asn600. A lipid anchor (GPI-anchor amidated glycine) is attached at Gly612. A propeptide spans 613–633 (AGNNMRLTFGAAIIGIAAFLI) (removed in mature form).

It belongs to the HWP1 family. Post-translationally, the GPI-anchor is attached to the protein in the endoplasmic reticulum and serves to target the protein to the cell surface. There, the glucosamine-inositol phospholipid moiety is cleaved off and the GPI-modified mannoprotein is covalently attached via its lipidless GPI glycan remnant to the 1,6-beta-glucan of the outer cell wall layer. In terms of processing, N- and O-glycosylated.

It localises to the secreted. It is found in the cell wall. The protein localises to the membrane. Functionally, major hyphal cell wall protein which plays a role of adhesin and is required for mating, normal hyphal development, cell-to-cell adhesive functions necessary for biofilm integrity, attachment to host, and virulence. Promotes interactions with host and bacterial molecules, thus leading to effective colonization within polymicrobial communities. Plays a crucial role in gastrointestinal colonization, in mucosal symptomatic and asymptomatic infections, in vaginitis, as well as in lethal oroesophageal candidiasis, caused by the combined action of fungal virulence factors and host inflammatory responses when protective immunity is absent. This chain is Hyphal wall protein 1, found in Candida albicans (strain WO-1) (Yeast).